We begin with the raw amino-acid sequence, 258 residues long: Type III pantothenate kinase (258 aa).

D12 to A19 contacts ATP. Substrate-binding positions include Y94 and G109–V112. D111 acts as the Proton acceptor in catalysis. D132 provides a ligand contact to K(+). T135 contributes to the ATP binding site. T187 contributes to the substrate binding site.

The protein belongs to the type III pantothenate kinase family. Homodimer. Requires NH4(+) as cofactor. The cofactor is K(+).

It is found in the cytoplasm. It carries out the reaction (R)-pantothenate + ATP = (R)-4'-phosphopantothenate + ADP + H(+). The protein operates within cofactor biosynthesis; coenzyme A biosynthesis; CoA from (R)-pantothenate: step 1/5. Its function is as follows. Catalyzes the phosphorylation of pantothenate (Pan), the first step in CoA biosynthesis. In Borreliella afzelii (strain PKo) (Borrelia afzelii), this protein is Type III pantothenate kinase.